A 157-amino-acid polypeptide reads, in one-letter code: Small ribosomal subunit protein uS7 (157 aa).

It belongs to the universal ribosomal protein uS7 family. As to quaternary structure, part of the 30S ribosomal subunit. Contacts proteins S9 and S11.

One of the primary rRNA binding proteins, it binds directly to 16S rRNA where it nucleates assembly of the head domain of the 30S subunit. Is located at the subunit interface close to the decoding center, probably blocks exit of the E-site tRNA. This chain is Small ribosomal subunit protein uS7, found in Chlamydia abortus (strain DSM 27085 / S26/3) (Chlamydophila abortus).